The following is a 238-amino-acid chain: Flagellar L-ring protein (238 aa).

Residues 1-23 (MIKLFICQKKYYLTAIFLLTIQS) form the signal peptide. A lipid anchor (N-palmitoyl cysteine) is attached at cysteine 24. Cysteine 24 carries S-diacylglycerol cysteine lipidation.

It belongs to the FlgH family. In terms of assembly, the basal body constitutes a major portion of the flagellar organelle and consists of four rings (L,P,S, and M) mounted on a central rod.

The protein resides in the cell outer membrane. It localises to the bacterial flagellum basal body. Its function is as follows. Assembles around the rod to form the L-ring and probably protects the motor/basal body from shearing forces during rotation. This Buchnera aphidicola subsp. Acyrthosiphon pisum (strain 5A) protein is Flagellar L-ring protein.